The following is a 363-amino-acid chain: 3-dehydroquinate synthase (363 aa).

Residues 72–77 (SGEKEK), 130–131 (TT), K142, and K151 each bind NAD(+). Zn(2+) contacts are provided by E184, H247, and H264.

Belongs to the sugar phosphate cyclases superfamily. Dehydroquinate synthase family. It depends on Co(2+) as a cofactor. Requires Zn(2+) as cofactor. NAD(+) serves as cofactor.

It localises to the cytoplasm. It carries out the reaction 7-phospho-2-dehydro-3-deoxy-D-arabino-heptonate = 3-dehydroquinate + phosphate. It participates in metabolic intermediate biosynthesis; chorismate biosynthesis; chorismate from D-erythrose 4-phosphate and phosphoenolpyruvate: step 2/7. Functionally, catalyzes the conversion of 3-deoxy-D-arabino-heptulosonate 7-phosphate (DAHP) to dehydroquinate (DHQ). The polypeptide is 3-dehydroquinate synthase (Bacillus thuringiensis (strain Al Hakam)).